Reading from the N-terminus, the 309-residue chain is Dihydroorotate dehydrogenase B (NAD(+)), catalytic subunit (309 aa).

FMN-binding positions include Ser21 and 45-46; that span reads KA. Substrate-binding positions include Lys45 and 69–73; that span reads NAIGL. 2 residues coordinate FMN: Asn99 and Asn127. Residue Asn127 participates in substrate binding. Cys130 serves as the catalytic Nucleophile. Lys165 and Ile191 together coordinate FMN. Substrate is bound at residue 192-193; it reads NT. Residues Gly217, 243–244, and 265–266 contribute to the FMN site; these read GG and GT.

Belongs to the dihydroorotate dehydrogenase family. Type 1 subfamily. As to quaternary structure, heterotetramer of 2 PyrK and 2 PyrD type B subunits. Requires FMN as cofactor.

It is found in the cytoplasm. The catalysed reaction is (S)-dihydroorotate + NAD(+) = orotate + NADH + H(+). The protein operates within pyrimidine metabolism; UMP biosynthesis via de novo pathway; orotate from (S)-dihydroorotate (NAD(+) route): step 1/1. Catalyzes the conversion of dihydroorotate to orotate with NAD(+) as electron acceptor. This is Dihydroorotate dehydrogenase B (NAD(+)), catalytic subunit (pyrD) from Bacillus cytotoxicus (strain DSM 22905 / CIP 110041 / 391-98 / NVH 391-98).